The sequence spans 654 residues: Dystrobrevin beta (654 aa).

Methionine 1 is subject to N-acetylmethionine. Residues threonine 11, threonine 69, threonine 179, and threonine 212 each carry the phosphothreonine modification. The segment at 238 to 294 adopts a ZZ-type zinc-finger fold; the sequence is FHPVECSYCHCESMMGFRYRCQQCHNYQLCQNCFWRGHAGGPHSNQHQMKELSSWKS. Zn(2+) is bound by residues cysteine 243, cysteine 246, cysteine 258, cysteine 261, cysteine 267, cysteine 270, histidine 280, and histidine 284. Serine 394 carries the post-translational modification Phosphoserine. A syntrophin-binding region region spans residues 399 to 448; it reads DEEHRLIARYAARLAAEAGNMTRPPTDASFNFDANKQQRQLIAELENKNR. Threonine 424 carries the phosphothreonine modification. Residues 429-519 are a coiled coil; the sequence is NFDANKQQRQ…LEGLMKLLKA (91 aa). Positions 520 to 562 are disordered; it reads QATGSPHTSPTHGGGRSMPMPVRSTSAGSTPTHGPQDSLSGVG. Composition is skewed to polar residues over residues 521-530 and 542-558; these read ATGSPHTSPT and RSTSAGSTPTHGPQDSL.

This sequence belongs to the dystrophin family. Dystrobrevin subfamily. Interacts with dystrophin short form DP71 and syntrophins SNTG1 and SNTG2. Binds DTNBP1. Forms a specific complex composed of DMD, SNTB2 and SNTA1 in neuron; the interaction with SNTB2 and SNTA1 is DMD independent. Interacts with UTRN and dystrophin short form DP71 in the kidney and liver. Interacts with SNTB1, SNTB2 and SNTA1 in kidney and liver. Interacts with KIF5A. Interacts with HMG20A and HMG20B. Interacts with OLFM1. Interacts with PRKAR2B and PRKAR1A. Phosphorylated by PKA. Phosphorylation at Thr-11 alters the interaction with KIF5A. Expressed in neurons. In the isocortex, expressed most prominently in the somata (including the nuclei) and the dendrites of the pyramidal cells. Expressed in the hippocampus CA1, CA2, and CA3 neurons, namely in the initial segments of dendrites. Expressed in the Purkinje cells, molecular layer interneurons, and granule cells of cerebellum. Expressed in axon fascicles associated with the spinal trigeminal tract and in the internal capsule in the brainstem.

Its subcellular location is the cytoplasm. It is found in the postsynaptic density. It localises to the cell projection. The protein resides in the dendrite. The protein localises to the basal cell membrane. Its subcellular location is the postsynapse. It is found in the nucleus. Its function is as follows. Scaffolding protein that assembles DMD and SNTA1 molecules to the basal membrane of kidney cells and liver sinusoids. May function as a repressor of the SYN1 promoter through the binding of repressor element-1 (RE-1), in turn regulates SYN1 expression and may be involved in cell proliferation regulation during the early phase of neural differentiation. May be required for proper maturation and function of a subset of inhibitory synapses. The polypeptide is Dystrobrevin beta (Rattus norvegicus (Rat)).